Here is a 204-residue protein sequence, read N- to C-terminus: ATP phosphoribosyltransferase (204 aa).

It belongs to the ATP phosphoribosyltransferase family. Short subfamily. Heteromultimer composed of HisG and HisZ subunits.

Its subcellular location is the cytoplasm. The enzyme catalyses 1-(5-phospho-beta-D-ribosyl)-ATP + diphosphate = 5-phospho-alpha-D-ribose 1-diphosphate + ATP. The protein operates within amino-acid biosynthesis; L-histidine biosynthesis; L-histidine from 5-phospho-alpha-D-ribose 1-diphosphate: step 1/9. Functionally, catalyzes the condensation of ATP and 5-phosphoribose 1-diphosphate to form N'-(5'-phosphoribosyl)-ATP (PR-ATP). Has a crucial role in the pathway because the rate of histidine biosynthesis seems to be controlled primarily by regulation of HisG enzymatic activity. The polypeptide is ATP phosphoribosyltransferase (Staphylococcus aureus (strain bovine RF122 / ET3-1)).